Reading from the N-terminus, the 178-residue chain is Co-chaperone protein p23-1 (178 aa).

Positions 2-91 (SRHPTVKWAQ…AESKWWNRLT (90 aa)) constitute a CS domain. Acidic residues-rich tracts occupy residues 112–126 (DDED…DFGD) and 136–155 (DTDE…EGET). Positions 112-178 (DDEDKGGEGD…DEEGVNAKKD (67 aa)) are disordered. A compositionally biased stretch (basic and acidic residues) spans 157–178 (AETKEKKIDGEKDEEGVNAKKD).

This sequence belongs to the p23/wos2 family. In terms of assembly, interacts with HSP90 in an ATP-dependent manner.

Functionally, acts as a co-chaperone for HSP90. The chain is Co-chaperone protein p23-1 from Brassica napus (Rape).